The sequence spans 334 residues: Procathepsin L (334 aa).

Positions 1–17 (MNLLLLLAVLCLGTALA) are cleaved as a signal peptide. The propeptide at 18–113 (TPKFDQTFSA…RLFQEPLMLK (96 aa)) is activation peptide. E122 provides a ligand contact to Zn(2+). 2 cysteine pairs are disulfide-bonded: C135–C178 and C169–C211. C138 is an active-site residue. E163, D184, E199, and E205 together coordinate Zn(2+). N221 carries an N-linked (GlcNAc...) (high mannose) asparagine glycan. Positions 227, 250, 253, and 275 each coordinate Zn(2+). Residues C269 and C322 are joined by a disulfide bond. H276 is an active-site residue. Residues 289–290 (DS) constitute a propeptide that is removed on maturation. Residue N300 is part of the active site.

The protein belongs to the peptidase C1 family. In terms of assembly, dimer of a heavy and a light chain linked by disulfide bonds. Interacts with Long isoform of CD74/Ii chain; the interaction stabilizes the conformation of mature CTSL. During export along the endocytic pathway, pro-CTSL undergoes several proteolytic cleavages to generate the CTSL single-chain and two-chain mature forms, composed of a heavy chain linked to a light chain by disulfide bonds. Autocleavage; produces the single-chain CTSL after cleavage of the propeptide. The cleavage can be intermolecular. In terms of tissue distribution, expressed in thymus, kidney and liver. Expressed in thyroid epithelial cells. Expressed in cortical thymic epithelial cells. Expressed by antigen presenting cells (APCs) such as dendritic cells and macrophages.

It is found in the lysosome. The protein resides in the apical cell membrane. It localises to the secreted. The protein localises to the extracellular space. Its subcellular location is the cytoplasmic vesicle. It is found in the secretory vesicle. The protein resides in the chromaffin granule. The enzyme catalyses Specificity close to that of papain. As compared to cathepsin B, cathepsin L exhibits higher activity toward protein substrates, but has little activity on Z-Arg-Arg-NHMec, and no peptidyl-dipeptidase activity.. Its activity is regulated as follows. Long isoform of CD74/Ii chain stabilizes the conformation of mature CTSL by binding to its active site and serving as a chaperone to help maintain a pool of mature enzyme in endocytic compartments and extracellular space of APCs. IFNG enhances the conversion into the CTSL mature and active form. Inhibited by CST6. Inhibited by the glycopeptide antibiotic teicoplanin. Inhibited by amantadine. Thiol protease important for the overall degradation of proteins in lysosomes. Involved in the solubilization of cross-linked TG/thyroglobulin and in the subsequent release of thyroid hormone thyroxine (T4) by limited proteolysis of TG/thyroglobulin in the thyroid follicle lumen. In neuroendocrine chromaffin cells secretory vesicles, catalyzes the prohormone proenkephalin processing to the active enkephalin peptide neurotransmitter. In thymus, regulates CD4(+) T cell positive selection by generating the major histocompatibility complex class II (MHCII) bound peptide ligands presented by cortical thymic epithelial cells. Also mediates invariant chain processing in cortical thymic epithelial cells. Major elastin-degrading enzyme at neutral pH. Accumulates as a mature and active enzyme in the extracellular space of antigen presenting cells (APCs) to regulate degradation of the extracellular matrix in the course of inflammation. Secreted form generates endostatin from COL18A1. Critical for cardiac morphology and function. Plays an important role in hair follicle morphogenesis and cycling, as well as epidermal differentiation. Required for maximal stimulation of steroidogenesis by TIMP1. In Mus musculus (Mouse), this protein is Procathepsin L.